A 267-amino-acid chain; its full sequence is Integral membrane protein 2C (267 aa).

Thr37 carries the phosphothreonine modification. The chain crosses the membrane as a helical; Signal-anchor for type II membrane protein span at residues 55–75 (VGGVCYLSMGMVVLLMGLVFA). Positions 136-230 (FGGGDPADII…LCNGKDTYRL (95 aa)) constitute a BRICHOS domain. Cys163 and Cys222 are disulfide-bonded. Asn169 is a glycosylation site (N-linked (GlcNAc...) asparagine).

The protein belongs to the ITM2 family. Interacts with BACE1. Interacts with APP. Interacts with STMN2. In terms of processing, type I membrane-bound, as well as soluble, furin has a pre-eminent role in ITM2C proteolytic processing. PCSK7 and PCSK5 may also be involved although to a lesser extent. The soluble form of PCSK7 is incapable of processing ITM2C. Fails to undergo shedding by ADAM10 and intramembrane cleavage by SPPL2B. In terms of tissue distribution, high levels in the brain, specifically in the cerebral cortex, medulla, amygdala, hippocampus, thalamus, caudate nucleus, cerebellum, olfactory lobe and spinal cord. Very low levels in other organs.

It is found in the lysosome membrane. Its subcellular location is the cell membrane. Negative regulator of amyloid-beta peptide production. May inhibit the processing of APP by blocking its access to alpha- and beta-secretase. Binding to the beta-secretase-cleaved APP C-terminal fragment is negligible, suggesting that ITM2C is a poor gamma-secretase cleavage inhibitor. May play a role in TNF-induced cell death and neuronal differentiation. The sequence is that of Integral membrane protein 2C (ITM2C) from Homo sapiens (Human).